A 200-amino-acid polypeptide reads, in one-letter code: Phospholipase A2 inhibitor CNF (200 aa).

An N-terminal signal peptide occupies residues 1–19; it reads MKYLHTICLLFIFVARGNS. Intrachain disulfides connect Cys22-Cys46, Cys25-Cys32, Cys39-Cys67, Cys73-Cys94, Cys95-Cys100, Cys118-Cys143, Cys136-Cys165, and Cys169-Cys191. Residue Asn176 is glycosylated (N-linked (GlcNAc...) asparagine; partial).

Occurs as a mixture of oligomers. Tetrameric arrangement appears to be the predominant quaternary structure. Interacts with phospholipase A2 crotoxin basic subunit CBd; the interaction leads to dissociation of the CA-CB heterodimer and to inhibition of PLA2 activity of the CB subunit. In terms of processing, the carbohydrate moiety increases the inhibition capacity of CNF, but is not essential for activity and for oligomerization. In terms of tissue distribution, expressed by the liver.

It localises to the secreted. Functionally, inhibits the PLA2 activity of crotoxin (CTX) by replacing the acid subunit (CA) in the CTX complex. Displays a pro-inflammatory action through activation of important main signaling pathways for human leukocytes, in vitro. Abolishes both the muscle-paralyzing and muscle-damaging activities of CTX in mice phrenic nerve-diaphragm muscle preparations. The sequence is that of Phospholipase A2 inhibitor CNF from Crotalus durissus terrificus (South American rattlesnake).